The sequence spans 169 residues: Monothiol glutaredoxin-S15, mitochondrial (169 aa).

A mitochondrion-targeting transit peptide spans methionine 1–phenylalanine 37. Residues serine 38–serine 61 are disordered. Residues lysine 66–glutamine 168 form the Glutaredoxin domain. Lysine 83 serves as a coordination point for glutathione. Position 91 (cysteine 91) interacts with [2Fe-2S] cluster. Residues lysine 120, phenylalanine 132, and serine 145–aspartate 146 each bind glutathione.

The protein belongs to the glutaredoxin family. CGFS subfamily. [2Fe-2S]-bridged holo-homodimer. Interacts in vitro with SUFE1, BOLA1, BOLA2 and BOLA4. Interacts in vivo only with BOLA4.

It is found in the mitochondrion. Its function is as follows. May only reduce GSH-thiol disulfides, but not protein disulfides. Participates probably to the maturation of iron-sulfur proteins and to the regulation of the redox state of the BOLA proteins. This Arabidopsis thaliana (Mouse-ear cress) protein is Monothiol glutaredoxin-S15, mitochondrial.